A 182-amino-acid polypeptide reads, in one-letter code: UPF0397 protein BCE_2667 (182 aa).

The next 5 helical transmembrane spans lie at 9–29 (VVAIGIGAALYGILGLWGFSI), 40–60 (AILTIFGALFGPVAGLLIGLI), 71–91 (WGIWWGWVFSSGIIGFAMGLI), 114–134 (ITGLIGIVIAIIFAGAFDIIV), and 142–162 (IVIQVLGATIADVIVFLVLGL).

This sequence belongs to the UPF0397 family.

The protein localises to the cell membrane. This is UPF0397 protein BCE_2667 from Bacillus cereus (strain ATCC 10987 / NRS 248).